The primary structure comprises 180 residues: Large ribosomal subunit protein uL5 (180 aa).

The protein belongs to the universal ribosomal protein uL5 family. Part of the 50S ribosomal subunit; part of the 5S rRNA/L5/L18/L25 subcomplex. Contacts the 5S rRNA and the P site tRNA. Forms a bridge to the 30S subunit in the 70S ribosome.

Functionally, this is one of the proteins that bind and probably mediate the attachment of the 5S RNA into the large ribosomal subunit, where it forms part of the central protuberance. In the 70S ribosome it contacts protein S13 of the 30S subunit (bridge B1b), connecting the 2 subunits; this bridge is implicated in subunit movement. Contacts the P site tRNA; the 5S rRNA and some of its associated proteins might help stabilize positioning of ribosome-bound tRNAs. This is Large ribosomal subunit protein uL5 from Streptococcus agalactiae serotype Ia (strain ATCC 27591 / A909 / CDC SS700).